A 92-amino-acid polypeptide reads, in one-letter code: RQC P-site tRNA stabilizing factor (92 aa).

Positions 5–65 (MRLDKYLKVS…GPKIVTAKIE (61 aa)) constitute an S4 RNA-binding domain.

It belongs to the RqcP family. Associates with stalled 50S ribosomal subunits. Binds to RqcH, 23S rRNA and the P-site tRNA. Does not require RqcH for association with 50S subunits.

Key component of the ribosome quality control system (RQC), a ribosome-associated complex that mediates the extraction of incompletely synthesized nascent chains from stalled ribosomes and their subsequent degradation. RqcH recruits Ala-charged tRNA, and with RqcP directs the elongation of stalled nascent chains on 50S ribosomal subunits, leading to non-templated C-terminal alanine extensions (Ala tail). The Ala tail promotes nascent chain degradation. RqcP is associated with the translocation-like movement of the peptidyl-tRNA from the A-site into the P-site. The chain is RQC P-site tRNA stabilizing factor from Listeria innocua serovar 6a (strain ATCC BAA-680 / CLIP 11262).